A 503-amino-acid chain; its full sequence is GMP synthase [glutamine-hydrolyzing] (503 aa).

A Glutamine amidotransferase type-1 domain is found at Met1 to Asp189. Residue Cys78 is the Nucleophile of the active site. Active-site residues include His164 and Glu166. The GMPS ATP-PPase domain maps to Trp190–Arg378. Ser217–Ser223 is an ATP binding site.

Homodimer.

It carries out the reaction XMP + L-glutamine + ATP + H2O = GMP + L-glutamate + AMP + diphosphate + 2 H(+). Its pathway is purine metabolism; GMP biosynthesis; GMP from XMP (L-Gln route): step 1/1. In terms of biological role, catalyzes the synthesis of GMP from XMP. The chain is GMP synthase [glutamine-hydrolyzing] from Thermus thermophilus (strain ATCC BAA-163 / DSM 7039 / HB27).